Reading from the N-terminus, the 158-residue chain is Transcription factor HY5 (158 aa).

Over residues 1 to 25 (MQEQATSSIAASSLPSSSERSSSSA) the composition is skewed to low complexity. Residues 1–105 (MQEQATSSIA…NRVSAQQARE (105 aa)) form a disordered region. Basic and acidic residues predominate over residues 26–44 (LHHELKEGMESDDEIRRVP). Residues 35–46 (ESDDEIRRVPEM) form an interaction with COP1 region. Low complexity predominate over residues 47–58 (GGEATGTTSASG). The region spanning 86–149 (ENKRLKRLLR…QMLRHILKNT (64 aa)) is the bZIP domain. Residues 88 to 108 (KRLKRLLRNRVSAQQARERKK) form a basic motif region. The segment at 114–142 (LEARVKELETKNAELEERLSTLQNENQML) is leucine-zipper.

It belongs to the bZIP family. As to quaternary structure, interacts with COP1. Post-translationally, ubiquitinated by COP1. Ubiquitination takes place in darkness and leads to its subsequent degradation, thereby preventing to activate photomorphogenesis signals.

The protein localises to the nucleus. Its function is as follows. Transcription factor that promotes photomorphogenesis in the light and positively regulates fruit pigmentation and fruit nutritional quality. Probably acts downstream of the light receptor network and directly affects transcription of light-induced genes. The polypeptide is Transcription factor HY5 (HY5) (Solanum lycopersicum (Tomato)).